A 203-amino-acid chain; its full sequence is Superoxide dismutase [Mn] (203 aa).

Mn(2+)-binding residues include histidine 27, histidine 81, aspartate 164, and histidine 168.

This sequence belongs to the iron/manganese superoxide dismutase family. In terms of assembly, homodimer. The cofactor is Mn(2+).

The enzyme catalyses 2 superoxide + 2 H(+) = H2O2 + O2. In terms of biological role, destroys superoxide anion radicals which are normally produced within the cells and which are toxic to biological systems. Partially complements double sodA-sodB deletions in E.coli. The sequence is that of Superoxide dismutase [Mn] from Pseudomonas aeruginosa (strain ATCC 15692 / DSM 22644 / CIP 104116 / JCM 14847 / LMG 12228 / 1C / PRS 101 / PAO1).